Here is a 251-residue protein sequence, read N- to C-terminus: MKTTKFNIENLDLFYGENQALKSINLPIPTRQVTALIGPSGCGKSTLLRCLNRMNDLIEGVTITGKLTMDGQDVYGNIDVSDLRIRVGMVFQKPNPFPMSIYENVAYGLRAQGIKDKKHLDEVVERSLRGAALWDEVKDRLKSHAFGLSGGQQQRLCIARTIAMEPDVILMDEPTSALDPIATHKIEELMEDLKKNYTIVIVTHSMQQARRISDRTAFFLMGELVEHDDTQVIFSNPRDDRTRGYVNGDFG.

The region spanning 6–246 (FNIENLDLFY…PRDDRTRGYV (241 aa)) is the ABC transporter domain. An ATP-binding site is contributed by 38–45 (GPSGCGKS).

It belongs to the ABC transporter superfamily. Phosphate importer (TC 3.A.1.7) family. As to quaternary structure, the complex is composed of two ATP-binding proteins (PstB), two transmembrane proteins (PstC and PstA) and a solute-binding protein (PstS).

The protein localises to the cell inner membrane. The catalysed reaction is phosphate(out) + ATP + H2O = ADP + 2 phosphate(in) + H(+). In terms of biological role, part of the ABC transporter complex PstSACB involved in phosphate import. Responsible for energy coupling to the transport system. This chain is Phosphate import ATP-binding protein PstB 2, found in Vibrio cholerae serotype O1 (strain ATCC 39315 / El Tor Inaba N16961).